The following is a 198-amino-acid chain: Recombination protein RecR (198 aa).

The segment at 59–74 (CSLCCNYTDHDPCPIC) adopts a C4-type zinc-finger fold. The Toprim domain occupies 82–175 (TLLCIVEQPR…KVTRIAHGLP (94 aa)).

It belongs to the RecR family.

In terms of biological role, may play a role in DNA repair. It seems to be involved in an RecBC-independent recombinational process of DNA repair. It may act with RecF and RecO. The polypeptide is Recombination protein RecR (Desulfitobacterium hafniense (strain DSM 10664 / DCB-2)).